We begin with the raw amino-acid sequence, 38 residues long: Photosystem II reaction center protein L (38 aa).

Residues 17–37 (SLFWGLLLIFVLAILFSNYFF) form a helical membrane-spanning segment.

Belongs to the PsbL family. As to quaternary structure, PSII is composed of 1 copy each of membrane proteins PsbA, PsbB, PsbC, PsbD, PsbE, PsbF, PsbH, PsbI, PsbJ, PsbK, PsbL, PsbM, PsbT, PsbX, PsbY, PsbZ, Psb30/Ycf12, at least 3 peripheral proteins of the oxygen-evolving complex and a large number of cofactors. It forms dimeric complexes.

It localises to the plastid. The protein resides in the chloroplast thylakoid membrane. Functionally, one of the components of the core complex of photosystem II (PSII). PSII is a light-driven water:plastoquinone oxidoreductase that uses light energy to abstract electrons from H(2)O, generating O(2) and a proton gradient subsequently used for ATP formation. It consists of a core antenna complex that captures photons, and an electron transfer chain that converts photonic excitation into a charge separation. This subunit is found at the monomer-monomer interface and is required for correct PSII assembly and/or dimerization. This chain is Photosystem II reaction center protein L, found in Chara vulgaris (Common stonewort).